Consider the following 1372-residue polypeptide: DNA-directed RNA polymerase subunit beta (1372 aa).

Belongs to the RNA polymerase beta chain family. In terms of assembly, the RNAP catalytic core consists of 2 alpha, 1 beta, 1 beta' and 1 omega subunit. When a sigma factor is associated with the core the holoenzyme is formed, which can initiate transcription.

The catalysed reaction is RNA(n) + a ribonucleoside 5'-triphosphate = RNA(n+1) + diphosphate. Its function is as follows. DNA-dependent RNA polymerase catalyzes the transcription of DNA into RNA using the four ribonucleoside triphosphates as substrates. In Nitratidesulfovibrio vulgaris (strain ATCC 29579 / DSM 644 / CCUG 34227 / NCIMB 8303 / VKM B-1760 / Hildenborough) (Desulfovibrio vulgaris), this protein is DNA-directed RNA polymerase subunit beta.